The following is a 211-amino-acid chain: Large ribosomal subunit protein uL3 (211 aa).

Positions 116-142 (GTSGVMKKHGFSGNRASHGVSRNHRLG) are disordered.

The protein belongs to the universal ribosomal protein uL3 family. In terms of assembly, part of the 50S ribosomal subunit. Forms a cluster with proteins L14 and L19.

One of the primary rRNA binding proteins, it binds directly near the 3'-end of the 23S rRNA, where it nucleates assembly of the 50S subunit. The protein is Large ribosomal subunit protein uL3 of Fusobacterium nucleatum subsp. nucleatum (strain ATCC 25586 / DSM 15643 / BCRC 10681 / CIP 101130 / JCM 8532 / KCTC 2640 / LMG 13131 / VPI 4355).